The following is a 561-amino-acid chain: Sesquiterpene synthase 1 (561 aa).

Positions 313, 317, 458, and 466 each coordinate Mg(2+). The short motif at 313 to 317 (DDIYD) is the DDXXD motif element.

It belongs to the terpene synthase family. Tpsa subfamily. Requires Mn(2+) as cofactor. Mg(2+) serves as cofactor.

It localises to the cytoplasm. It catalyses the reaction (2E,6E)-farnesyl diphosphate = (1S,8aR)-delta-cadinene + diphosphate. Its pathway is secondary metabolite biosynthesis; terpenoid biosynthesis. In terms of biological role, involved in the biosynthesis of delta-cadinene. This chain is Sesquiterpene synthase 1 (STS1), found in Thapsia garganica (Deadly carrot).